Reading from the N-terminus, the 380-residue chain is Bifunctional enzyme IspD/IspF (380 aa).

The segment at Met-1–Ile-224 is 2-C-methyl-D-erythritol 4-phosphate cytidylyltransferase. Residues Arg-225–Gly-380 form a 2-C-methyl-D-erythritol 2,4-cyclodiphosphate synthase region. Asp-231 and His-233 together coordinate a divalent metal cation. Residues Asp-231–His-233 and His-257–Ser-258 each bind 4-CDP-2-C-methyl-D-erythritol 2-phosphate. A divalent metal cation is bound at residue His-265. Residues Asp-279–Gly-281, Thr-355–Glu-358, Phe-362, and Arg-365 each bind 4-CDP-2-C-methyl-D-erythritol 2-phosphate.

The protein in the N-terminal section; belongs to the IspD/TarI cytidylyltransferase family. IspD subfamily. This sequence in the C-terminal section; belongs to the IspF family. A divalent metal cation is required as a cofactor.

The enzyme catalyses 2-C-methyl-D-erythritol 4-phosphate + CTP + H(+) = 4-CDP-2-C-methyl-D-erythritol + diphosphate. It carries out the reaction 4-CDP-2-C-methyl-D-erythritol 2-phosphate = 2-C-methyl-D-erythritol 2,4-cyclic diphosphate + CMP. The protein operates within isoprenoid biosynthesis; isopentenyl diphosphate biosynthesis via DXP pathway; isopentenyl diphosphate from 1-deoxy-D-xylulose 5-phosphate: step 2/6. Its pathway is isoprenoid biosynthesis; isopentenyl diphosphate biosynthesis via DXP pathway; isopentenyl diphosphate from 1-deoxy-D-xylulose 5-phosphate: step 4/6. In terms of biological role, bifunctional enzyme that catalyzes the formation of 4-diphosphocytidyl-2-C-methyl-D-erythritol from CTP and 2-C-methyl-D-erythritol 4-phosphate (MEP) (IspD), and catalyzes the conversion of 4-diphosphocytidyl-2-C-methyl-D-erythritol 2-phosphate (CDP-ME2P) to 2-C-methyl-D-erythritol 2,4-cyclodiphosphate (ME-CPP) with a corresponding release of cytidine 5-monophosphate (CMP) (IspF). In Paracoccus denitrificans (strain Pd 1222), this protein is Bifunctional enzyme IspD/IspF.